Reading from the N-terminus, the 139-residue chain is Arsenate reductase (139 aa).

Active-site nucleophile residues include Cys10, Cys82, and Cys89. 2 disulfide bridges follow: Cys10–Cys82 and Cys82–Cys89.

This sequence belongs to the low molecular weight phosphotyrosine protein phosphatase family. Thioredoxin-coupled ArsC subfamily.

The protein localises to the cytoplasm. It carries out the reaction arsenate + [thioredoxin]-dithiol + H(+) = arsenite + [thioredoxin]-disulfide + H2O. Its function is as follows. Catalyzes the reduction of arsenate [As(V)] to arsenite [As(III)]. This is Arsenate reductase from Oceanobacillus iheyensis (strain DSM 14371 / CIP 107618 / JCM 11309 / KCTC 3954 / HTE831).